The chain runs to 228 residues: Ribose-5-phosphate isomerase A (228 aa).

Substrate-binding positions include 27–30 (TGTT), 86–89 (DGAD), and 100–103 (KGMG). Glu-109 acts as the Proton acceptor in catalysis. Lys-127 is a binding site for substrate.

This sequence belongs to the ribose 5-phosphate isomerase family. In terms of assembly, homodimer.

It catalyses the reaction aldehydo-D-ribose 5-phosphate = D-ribulose 5-phosphate. Its pathway is carbohydrate degradation; pentose phosphate pathway; D-ribose 5-phosphate from D-ribulose 5-phosphate (non-oxidative stage): step 1/1. Catalyzes the reversible conversion of ribose-5-phosphate to ribulose 5-phosphate. This is Ribose-5-phosphate isomerase A from Borreliella afzelii (strain PKo) (Borrelia afzelii).